The chain runs to 187 residues: Peptidyl-tRNA hydrolase (187 aa).

Residue Tyr14 coordinates tRNA. Catalysis depends on His19, which acts as the Proton acceptor. Residues Tyr64 and Asn66 each contribute to the tRNA site.

The protein belongs to the PTH family. As to quaternary structure, monomer.

Its subcellular location is the cytoplasm. The catalysed reaction is an N-acyl-L-alpha-aminoacyl-tRNA + H2O = an N-acyl-L-amino acid + a tRNA + H(+). Its function is as follows. Hydrolyzes ribosome-free peptidyl-tRNAs (with 1 or more amino acids incorporated), which drop off the ribosome during protein synthesis, or as a result of ribosome stalling. In terms of biological role, catalyzes the release of premature peptidyl moieties from peptidyl-tRNA molecules trapped in stalled 50S ribosomal subunits, and thus maintains levels of free tRNAs and 50S ribosomes. The chain is Peptidyl-tRNA hydrolase from Carboxydothermus hydrogenoformans (strain ATCC BAA-161 / DSM 6008 / Z-2901).